A 109-amino-acid polypeptide reads, in one-letter code: Aquaporin-2 (109 aa).

Residues 1 to 6 are Cytoplasmic-facing; it reads SIAFSR. The helical transmembrane segment at 7–27 threads the bilayer; it reads AVLSEFLATLLFVFFGLGSAL. Residues 28–35 are Extracellular-facing; it reads NWPQALPS. Residues 36–54 traverse the membrane as a helical segment; it reads VLQIAMAFGLAIGTLVQTL. At 55–59 the chain is on the cytoplasmic side; it reads GHISG. Positions 60–69 form an intramembrane region, discontinuously helical; that stretch reads AHINPAVTIA. The NPA 1 signature appears at 63 to 65; the sequence is NPA. At 70–80 the chain is on the cytoplasmic side; the sequence is CLVGCHVSFLR. A helical membrane pass occupies residues 81 to 102; the sequence is ALFYLAAQLLGAVAGAALLHEL. The Extracellular segment spans residues 103–109; sequence TPPDIRG.

The protein belongs to the MIP/aquaporin (TC 1.A.8) family. In terms of assembly, homotetramer. Post-translationally, serine phosphorylation is necessary and sufficient for expression at the apical membrane. Endocytosis is not phosphorylation-dependent. In terms of processing, N-glycosylated.

The protein localises to the apical cell membrane. Its subcellular location is the basolateral cell membrane. It is found in the cell membrane. It localises to the cytoplasmic vesicle membrane. The protein resides in the golgi apparatus. The protein localises to the trans-Golgi network membrane. It catalyses the reaction H2O(in) = H2O(out). The enzyme catalyses glycerol(in) = glycerol(out). In terms of biological role, forms a water-specific channel that provides the plasma membranes of renal collecting duct with high permeability to water, thereby permitting water to move in the direction of an osmotic gradient. Plays an essential role in renal water homeostasis. Could also be permeable to glycerol. The protein is Aquaporin-2 of Procavia capensis habessinica (Abyssinian hyrax).